We begin with the raw amino-acid sequence, 367 residues long: Queuine tRNA-ribosyltransferase (367 aa).

Residue Asp92 is the Proton acceptor of the active site. Residues Asp92–Phe96, Asp146, Gln188, and Gly215 each bind substrate. The segment at Gly246–Asp252 is RNA binding. Asp265 acts as the Nucleophile in catalysis. Zn(2+) is bound by residues Cys303, Cys305, Cys308, and His334.

The protein belongs to the queuine tRNA-ribosyltransferase family. In terms of assembly, homodimer. Within each dimer, one monomer is responsible for RNA recognition and catalysis, while the other monomer binds to the replacement base PreQ1. It depends on Zn(2+) as a cofactor.

The catalysed reaction is 7-aminomethyl-7-carbaguanine + guanosine(34) in tRNA = 7-aminomethyl-7-carbaguanosine(34) in tRNA + guanine. It functions in the pathway tRNA modification; tRNA-queuosine biosynthesis. Its function is as follows. Catalyzes the base-exchange of a guanine (G) residue with the queuine precursor 7-aminomethyl-7-deazaguanine (PreQ1) at position 34 (anticodon wobble position) in tRNAs with GU(N) anticodons (tRNA-Asp, -Asn, -His and -Tyr). Catalysis occurs through a double-displacement mechanism. The nucleophile active site attacks the C1' of nucleotide 34 to detach the guanine base from the RNA, forming a covalent enzyme-RNA intermediate. The proton acceptor active site deprotonates the incoming PreQ1, allowing a nucleophilic attack on the C1' of the ribose to form the product. After dissociation, two additional enzymatic reactions on the tRNA convert PreQ1 to queuine (Q), resulting in the hypermodified nucleoside queuosine (7-(((4,5-cis-dihydroxy-2-cyclopenten-1-yl)amino)methyl)-7-deazaguanosine). This Francisella tularensis subsp. tularensis (strain FSC 198) protein is Queuine tRNA-ribosyltransferase.